A 267-amino-acid polypeptide reads, in one-letter code: PF03932 family protein CutC (267 aa).

The protein belongs to the CutC family.

Its subcellular location is the cytoplasm. The protein is PF03932 family protein CutC of Xylella fastidiosa (strain 9a5c).